Here is a 572-residue protein sequence, read N- to C-terminus: Sulfate adenylyltransferase (572 aa).

Positions 1–169 (MANTPHGGVL…IQAINKLNHY (169 aa)) are N-terminal. A catalytic region spans residues 170 to 394 (DYVGLRYTPA…LRESHPPRAK (225 aa)). Q197 serves as a coordination point for sulfate. ATP-binding positions include 197-200 (QTRN) and 291-294 (GRDH). Catalysis depends on residues T198, R199, and N200. R199 is a sulfate binding site. A295 lines the sulfate pocket. M333 contributes to the ATP binding site. An allosteric regulation domain; adenylyl-sulfate kinase-like region spans residues 395–572 (QGFTIFLTGH…LLESQGFFGN (178 aa)). 3'-phosphoadenylyl sulfate is bound by residues 434-437 (ETVR), R451, 477-478 (IA), and K515.

It in the N-terminal section; belongs to the sulfate adenylyltransferase family. This sequence in the C-terminal section; belongs to the APS kinase family. In terms of assembly, homohexamer. Dimer of trimers.

It localises to the cytoplasm. It carries out the reaction sulfate + ATP + H(+) = adenosine 5'-phosphosulfate + diphosphate. The protein operates within sulfur metabolism; hydrogen sulfide biosynthesis; sulfite from sulfate: step 1/3. Allosterically inhibited by 3'-phosphoadenosine 5'-phosphosulfate (PAPS). In terms of biological role, catalyzes the first intracellular reaction of sulfate assimilation, forming adenosine-5'-phosphosulfate (APS) from inorganic sulfate and ATP. Plays an important role in sulfate activation as a component of the biosynthesis pathway of sulfur-containing amino acids. This is Sulfate adenylyltransferase from Yarrowia lipolytica (strain CLIB 122 / E 150) (Yeast).